The following is a 151-amino-acid chain: Flagellar assembly factor FliW 2 (151 aa).

It belongs to the FliW family. Interacts with translational regulator CsrA and flagellin(s).

Its subcellular location is the cytoplasm. Its function is as follows. Acts as an anti-CsrA protein, binds CsrA and prevents it from repressing translation of its target genes, one of which is flagellin. Binds to flagellin and participates in the assembly of the flagellum. This Desulfotalea psychrophila (strain LSv54 / DSM 12343) protein is Flagellar assembly factor FliW 2.